Consider the following 518-residue polypeptide: Crotonobetaine/carnitine--CoA ligase (518 aa).

The protein belongs to the ATP-dependent AMP-binding enzyme family.

The catalysed reaction is 4-(trimethylamino)butanoate + ATP + CoA = 4-(trimethylamino)butanoyl-CoA + AMP + diphosphate. It catalyses the reaction crotonobetaine + ATP + CoA = crotonobetainyl-CoA + AMP + diphosphate. The enzyme catalyses (R)-carnitine + ATP + CoA = (R)-carnitinyl-CoA + AMP + diphosphate. It participates in amine and polyamine metabolism; carnitine metabolism. Functionally, catalyzes the transfer of CoA to carnitine, generating the initial carnitinyl-CoA needed for the CaiB reaction cycle. Also has activity toward crotonobetaine and gamma-butyrobetaine. The sequence is that of Crotonobetaine/carnitine--CoA ligase from Proteus sp. (strain LE138).